Consider the following 506-residue polypeptide: Glutamate--tRNA ligase (506 aa).

The short motif at 29-39 is the 'HIGH' region element; it reads PSPTGTPHVGL. A 'KMSKS' region motif is present at residues 273 to 277; it reads KLSKR. Residue Lys276 participates in ATP binding.

Belongs to the class-I aminoacyl-tRNA synthetase family. Glutamate--tRNA ligase type 1 subfamily. In terms of assembly, monomer.

Its subcellular location is the cytoplasm. It catalyses the reaction tRNA(Glu) + L-glutamate + ATP = L-glutamyl-tRNA(Glu) + AMP + diphosphate. Catalyzes the attachment of glutamate to tRNA(Glu) in a two-step reaction: glutamate is first activated by ATP to form Glu-AMP and then transferred to the acceptor end of tRNA(Glu). This is Glutamate--tRNA ligase from Paenarthrobacter aurescens (strain TC1).